We begin with the raw amino-acid sequence, 413 residues long: Putative syntaxin-5 (413 aa).

The Cytoplasmic segment spans residues 1–391 (MSDFHNIRSR…RYLQNISKNR (391 aa)). Residues 257-290 (KNRRDKFSSGAAVPMGLPSSSSGANVRSKLLQDD) form a disordered region. Residues 321-383 (LEYAQARSNT…DMAHSELVRY (63 aa)) enclose the t-SNARE coiled-coil homology domain. A helical; Anchor for type IV membrane protein membrane pass occupies residues 392–412 (WLMIQVFGVLMVFFVVFVLFL). Position 413 (threonine 413) is a topological domain, extracellular.

This sequence belongs to the syntaxin family.

The protein resides in the membrane. In terms of biological role, potentially involved in docking of synaptic vesicles at presynaptic active zones. This is Putative syntaxin-5 (syx-5) from Caenorhabditis elegans.